The following is a 413-amino-acid chain: Mitochondrial inner membrane magnesium transporter MFM1 (413 aa).

The transit peptide at Met-1–Asp-35 directs the protein to the mitochondrion. Asn-202 carries N-linked (GlcNAc...) asparagine glycosylation. The helical transmembrane segment at Leu-329 to Leu-349 threads the bilayer. The YGMN signature appears at Tyr-353 to Asn-356. Residues Ala-367–Ile-387 traverse the membrane as a helical segment.

This sequence belongs to the CorA metal ion transporter (MIT) (TC 1.A.35) family. As to quaternary structure, forms homooligomers. Interacts with MRS2. In terms of processing, N-glycosylated. Glycosylation is important for correct localization of the protein.

The protein localises to the mitochondrion inner membrane. Functionally, mitochondrial inner membrane magnesium transporter required for mitochondrial magnesium homeostasis. Modulates the conductance of the MRS2 channel. Involved in the splicing of mRNA group II introns in mitochondria by affecting mitochondrial magnesium concentrations, which are critical for group II intron splicing. The protein is Mitochondrial inner membrane magnesium transporter MFM1 (MFM1) of Saccharomyces cerevisiae (strain ATCC 204508 / S288c) (Baker's yeast).